The chain runs to 81 residues: Thrombin-like enzyme collinein-3 (81 aa).

D4 is a catalytic residue. A disulfide bond links C51 and C68.

As to quaternary structure, monomer. Expressed by the vanom gland.

It is found in the secreted. Thrombin-like snake venom serine protease. The chain is Thrombin-like enzyme collinein-3 from Crotalus durissus collilineatus (Brazilian rattlesnake).